The primary structure comprises 260 residues: Proline-rich protein 33 (260 aa).

The interval 29–132 (GVQTVSPRPE…KVAPKPSRSG (104 aa)) is disordered. Over residues 73-83 (GPSPYSPPPAA) the composition is skewed to pro residues.

The sequence is that of Proline-rich protein 33 (Prr33) from Mus musculus (Mouse).